A 69-amino-acid chain; its full sequence is UPF0337 protein YjbJ (69 aa).

This sequence belongs to the UPF0337 (CsbD) family.

This is UPF0337 protein YjbJ (yjbJ) from Escherichia coli O6:H1 (strain CFT073 / ATCC 700928 / UPEC).